A 110-amino-acid polypeptide reads, in one-letter code: Endoribonuclease SymE (110 aa).

The SpoVT-AbrB domain maps to 29-74 (SSYPEYTRIPAITLKGQWLEDAGFTTGTQVDVRVMNGCIVLTAQQP).

The protein belongs to the SymE family.

The protein localises to the cytoplasm. Involved in the degradation and recycling of damaged RNA. It is itself a target for degradation by the ATP-dependent protease Lon. The chain is Endoribonuclease SymE from Salmonella choleraesuis (strain SC-B67).